Reading from the N-terminus, the 193-residue chain is Holliday junction branch migration complex subunit RuvA (193 aa).

The segment at 1-64 (MIGRIAGTLL…EDAHLLYGFL (64 aa)) is domain I. A domain II region spans residues 65-139 (TPPERSTFRE…GKLGADLGPL (75 aa)). The flexible linker stretch occupies residues 139-143 (LAGAA). The interval 144–193 (SPSDHATDILNALVALGYSEKEALAAIKNVPAGTGVSEGIKLSLKALSKA) is domain III.

Belongs to the RuvA family. In terms of assembly, homotetramer. Forms an RuvA(8)-RuvB(12)-Holliday junction (HJ) complex. HJ DNA is sandwiched between 2 RuvA tetramers; dsDNA enters through RuvA and exits via RuvB. An RuvB hexamer assembles on each DNA strand where it exits the tetramer. Each RuvB hexamer is contacted by two RuvA subunits (via domain III) on 2 adjacent RuvB subunits; this complex drives branch migration. In the full resolvosome a probable DNA-RuvA(4)-RuvB(12)-RuvC(2) complex forms which resolves the HJ.

The protein localises to the cytoplasm. In terms of biological role, the RuvA-RuvB-RuvC complex processes Holliday junction (HJ) DNA during genetic recombination and DNA repair, while the RuvA-RuvB complex plays an important role in the rescue of blocked DNA replication forks via replication fork reversal (RFR). RuvA specifically binds to HJ cruciform DNA, conferring on it an open structure. The RuvB hexamer acts as an ATP-dependent pump, pulling dsDNA into and through the RuvAB complex. HJ branch migration allows RuvC to scan DNA until it finds its consensus sequence, where it cleaves and resolves the cruciform DNA. In Burkholderia mallei (strain NCTC 10229), this protein is Holliday junction branch migration complex subunit RuvA.